Consider the following 100-residue polypeptide: Urease subunit gamma (100 aa).

It belongs to the urease gamma subunit family. In terms of assembly, heterotrimer of UreA (gamma), UreB (beta) and UreC (alpha) subunits. Three heterotrimers associate to form the active enzyme.

Its subcellular location is the cytoplasm. The enzyme catalyses urea + 2 H2O + H(+) = hydrogencarbonate + 2 NH4(+). It functions in the pathway nitrogen metabolism; urea degradation; CO(2) and NH(3) from urea (urease route): step 1/1. In Azotobacter vinelandii (strain DJ / ATCC BAA-1303), this protein is Urease subunit gamma.